A 169-amino-acid chain; its full sequence is N-alpha-acetyltransferase 50 (169 aa).

An N-acetyltransferase domain is found at 6–155 (IELGDVTPHN…DAHVLQKNLK (150 aa)). At threonine 12 the chain carries Phosphothreonine. Substrate is bound at residue tyrosine 31. An N6-acetyllysine mark is found at lysine 34 and lysine 37. Residue tyrosine 73 is part of the active site. Methionine 75 contacts substrate. 77–90 (LGCLAPYRRLGIGT) provides a ligand contact to acetyl-CoA. Tyrosine 110 bears the Phosphotyrosine mark. The active site involves histidine 112. 117–126 (NESAIDFYRK) lines the CoA pocket. Residues 138–141 (YYKR) are substrate. Lysine 140 is subject to N6-acetyllysine.

The protein belongs to the acetyltransferase family. GNAT subfamily. Component of the N-terminal acetyltransferase E (NatE) complex at least composed of NAA10, NAA15 and NAA50. Interacts with NAA10. Interacts with NAA15. Predominantly interacts with NAA15 in the N-terminal acetyltransferase A complex (NatA complex); the interactions reduce the acetylation activity of the NatA complex. Component of the N-terminal acetyltransferase E (NatE)/HYPK complex at least composed of NAA10, NAA15, NAA50 and HYPK. Within the complex interacts with NAA15. Its capacity to interact with the NatA complex is reduced by HYPK. Interacts with NAA35.

It is found in the cytoplasm. The protein resides in the nucleus. The catalysed reaction is N-terminal L-methionyl-L-alanyl-[protein] + acetyl-CoA = N-terminal N(alpha)-acetyl-L-methionyl-L-alanyl-[protein] + CoA + H(+). The enzyme catalyses N-terminal L-methionyl-L-seryl-[protein] + acetyl-CoA = N-terminal N(alpha)-acetyl-L-methionyl-L-seryl-[protein] + CoA + H(+). It carries out the reaction N-terminal L-methionyl-L-valyl-[protein] + acetyl-CoA = N-terminal N(alpha)-acetyl-L-methionyl-L-valyl-[protein] + CoA + H(+). It catalyses the reaction N-terminal L-methionyl-L-threonyl-[protein] + acetyl-CoA = N-terminal N(alpha)-acetyl-L-methionyl-L-threonyl-[protein] + CoA + H(+). The catalysed reaction is N-terminal L-methionyl-L-lysyl-[protein] + acetyl-CoA = N-terminal N(alpha)-acetyl-L-methionyl-L-lysyl-[protein] + CoA + H(+). The enzyme catalyses N-terminal L-methionyl-L-leucyl-[protein] + acetyl-CoA = N-terminal N(alpha)-acetyl-L-methionyl-L-leucyl-[protein] + CoA + H(+). It carries out the reaction N-terminal L-methionyl-L-phenylalanyl-[protein] + acetyl-CoA = N-terminal N(alpha)-acetyl-L-methionyl-L-phenylalanyl-[protein] + CoA + H(+). It catalyses the reaction N-terminal L-methionyl-L-tyrosyl-[protein] + acetyl-CoA = N-terminal N(alpha)-acetyl-L-methionyl-L-tyrosyl-[protein] + CoA + H(+). N-alpha-acetyltransferase that acetylates the N-terminus of proteins that retain their initiating methionine. Has a broad substrate specificity: able to acetylate the initiator methionine of most peptides, except for those with a proline in second position. Also displays N-epsilon-acetyltransferase activity by mediating acetylation of the side chain of specific lysines on proteins. Autoacetylates in vivo. The relevance of N-epsilon-acetyltransferase activity is however unclear: able to acetylate H4 in vitro, but this result has not been confirmed in vivo. Component of N-alpha-acetyltransferase complexes containing NAA10 and NAA15, which has N-alpha-acetyltransferase activity. Does not influence the acetyltransferase activity of NAA10. However, it negatively regulates the N-alpha-acetyltransferase activity of the N-terminal acetyltransferase A complex (also called the NatA complex). The multiprotein complexes probably constitute the major contributor for N-terminal acetylation at the ribosome exit tunnel, with NAA10 acetylating all amino termini that are devoid of methionine and NAA50 acetylating other peptides. Required for sister chromatid cohesion during mitosis by promoting binding of CDCA5/sororin to cohesin: may act by counteracting the function of NAA10. The polypeptide is N-alpha-acetyltransferase 50 (NAA50) (Bos taurus (Bovine)).